Consider the following 578-residue polypeptide: Proline--tRNA ligase (578 aa).

It belongs to the class-II aminoacyl-tRNA synthetase family. ProS type 1 subfamily. In terms of assembly, homodimer.

It is found in the cytoplasm. The catalysed reaction is tRNA(Pro) + L-proline + ATP = L-prolyl-tRNA(Pro) + AMP + diphosphate. Catalyzes the attachment of proline to tRNA(Pro) in a two-step reaction: proline is first activated by ATP to form Pro-AMP and then transferred to the acceptor end of tRNA(Pro). As ProRS can inadvertently accommodate and process non-cognate amino acids such as alanine and cysteine, to avoid such errors it has two additional distinct editing activities against alanine. One activity is designated as 'pretransfer' editing and involves the tRNA(Pro)-independent hydrolysis of activated Ala-AMP. The other activity is designated 'posttransfer' editing and involves deacylation of mischarged Ala-tRNA(Pro). The misacylated Cys-tRNA(Pro) is not edited by ProRS. The polypeptide is Proline--tRNA ligase (Burkholderia pseudomallei (strain K96243)).